The primary structure comprises 958 residues: Translation initiation factor IF-2 (958 aa).

Disordered regions lie at residues 67–95 (APAA…APAP) and 111–355 (PAPA…VPRG). The segment covering 75–95 (APAPGPAAPKAPAPAPAAPAP) has biased composition (pro residues). Low complexity predominate over residues 140–161 (PAPARQGGQAPRPGGPRPGNNP). Over residues 195 to 206 (RGERRNDGERPG) the composition is skewed to basic and acidic residues. Low complexity predominate over residues 209-221 (RPAAGAGGPRPAA). Over residues 228–241 (PGAPRPGAPRPGAP) the composition is skewed to pro residues. The span at 268–325 (GGAGRPGGAGRPGGGPGRPGGAPGAGTGGGAPAGGGFGKGGRGRGGTQGAFGKGGAGR) shows a compositional bias: gly residues. The span at 326-335 (GKQRKSKRAK) shows a compositional bias: basic residues. Residues 450 to 621 (ARAPVVTVMG…AVLLTADAAL (172 aa)) form the tr-type G domain. The segment at 459-466 (GHVDHGKT) is G1. 459-466 (GHVDHGKT) contacts GTP. A G2 region spans residues 484-488 (GITQH). Positions 509–512 (DTPG) are G3. GTP is bound by residues 509–513 (DTPGH) and 563–566 (NKID). Residues 563–566 (NKID) form a G4 region. Positions 599-601 (SAR) are G5.

The protein belongs to the TRAFAC class translation factor GTPase superfamily. Classic translation factor GTPase family. IF-2 subfamily.

Its subcellular location is the cytoplasm. Functionally, one of the essential components for the initiation of protein synthesis. Protects formylmethionyl-tRNA from spontaneous hydrolysis and promotes its binding to the 30S ribosomal subunits. Also involved in the hydrolysis of GTP during the formation of the 70S ribosomal complex. This is Translation initiation factor IF-2 from Paenarthrobacter aurescens (strain TC1).